The primary structure comprises 327 residues: Phosphate acyltransferase (327 aa).

Belongs to the PlsX family. In terms of assembly, homodimer. Probably interacts with PlsY.

It localises to the cytoplasm. It catalyses the reaction a fatty acyl-[ACP] + phosphate = an acyl phosphate + holo-[ACP]. It functions in the pathway lipid metabolism; phospholipid metabolism. Functionally, catalyzes the reversible formation of acyl-phosphate (acyl-PO(4)) from acyl-[acyl-carrier-protein] (acyl-ACP). This enzyme utilizes acyl-ACP as fatty acyl donor, but not acyl-CoA. In Mycoplasma mobile (strain ATCC 43663 / 163K / NCTC 11711) (Mesomycoplasma mobile), this protein is Phosphate acyltransferase.